The following is a 695-amino-acid chain: Polyribonucleotide nucleotidyltransferase (695 aa).

Residues aspartate 486 and aspartate 492 each contribute to the Mg(2+) site. One can recognise a KH domain in the interval 553-612 (PRIETMQINTSKIATVIGPGGKQIRQIIERSGAQVDINDDGVINIAASTQESINKAKELI). The 69-residue stretch at 622–690 (GKVYNGRVTS…EKGQLKLSHK (69 aa)) folds into the S1 motif domain.

This sequence belongs to the polyribonucleotide nucleotidyltransferase family. Mg(2+) serves as cofactor.

The protein resides in the cytoplasm. It catalyses the reaction RNA(n+1) + phosphate = RNA(n) + a ribonucleoside 5'-diphosphate. Its function is as follows. Involved in mRNA degradation. Catalyzes the phosphorolysis of single-stranded polyribonucleotides processively in the 3'- to 5'-direction. In Chlamydia trachomatis serovar A (strain ATCC VR-571B / DSM 19440 / HAR-13), this protein is Polyribonucleotide nucleotidyltransferase.